Reading from the N-terminus, the 292-residue chain is Beta-lactamase-like protein 2 homolog (292 aa).

Zn(2+) contacts are provided by H76, H78, D80, H81, H145, D163, and H198.

The protein belongs to the metallo-beta-lactamase superfamily. Glyoxalase II family.

The protein is Beta-lactamase-like protein 2 homolog of Drosophila melanogaster (Fruit fly).